We begin with the raw amino-acid sequence, 434 residues long: Cyclic 2,3-diphosphoglycerate synthetase (434 aa).

The protein belongs to the cyclic 2,3-diphosphoglycerate synthetase family.

The protein localises to the cytoplasm. The enzyme catalyses (2R)-2,3-bisphosphoglycerate + ATP + H(+) = cyclic (2R)-2,3-bisphosphoglycerate + ADP + phosphate. Catalyzes the formation of cyclic 2,3-diphosphoglycerate (cDPG) by formation of an intramolecular phosphoanhydride bond at the expense of ATP. The polypeptide is Cyclic 2,3-diphosphoglycerate synthetase (Thermococcus sibiricus (strain DSM 12597 / MM 739)).